A 172-amino-acid polypeptide reads, in one-letter code: Large ribosomal subunit protein uL10 (172 aa).

This sequence belongs to the universal ribosomal protein uL10 family. As to quaternary structure, part of the ribosomal stalk of the 50S ribosomal subunit. The N-terminus interacts with L11 and the large rRNA to form the base of the stalk. The C-terminus forms an elongated spine to which L12 dimers bind in a sequential fashion forming a multimeric L10(L12)X complex.

Its function is as follows. Forms part of the ribosomal stalk, playing a central role in the interaction of the ribosome with GTP-bound translation factors. This chain is Large ribosomal subunit protein uL10, found in Rhodospirillum centenum (strain ATCC 51521 / SW).